The chain runs to 347 residues: NADH-ubiquinone oxidoreductase chain 2 (347 aa).

11 consecutive transmembrane segments (helical) span residues 2–22 (LSPLIQSTLLMTLGLGTLVTF), 26–46 (SWILAWIGLEINTIAIIPLMA), 60–80 (YFIAQSAGSATLLVTACLAAW), 94–114 (IILNAMTLALMFKLGMAPMHF), 127–147 (TGMILATWQKLAPITLLIQIA), 151–171 (NNAFILGPALLSVFVGGWGGL), 179–197 (IIAYSSIAHMGWIASMAPF), 201–223 (ITWVTTLIYCLLTSTTFINLNTL), 242–262 (MLLLLLLLSLGGLPPLTGFTN), 274–294 (NLVIYLFMMMMGSLLSLFFYT), and 325–345 (LMTMLSINLFILTPQLMAIFI).

The protein belongs to the complex I subunit 2 family.

The protein resides in the mitochondrion inner membrane. The enzyme catalyses a ubiquinone + NADH + 5 H(+)(in) = a ubiquinol + NAD(+) + 4 H(+)(out). Core subunit of the mitochondrial membrane respiratory chain NADH dehydrogenase (Complex I) that is believed to belong to the minimal assembly required for catalysis. Complex I functions in the transfer of electrons from NADH to the respiratory chain. The immediate electron acceptor for the enzyme is believed to be ubiquinone. The chain is NADH-ubiquinone oxidoreductase chain 2 (MT-ND2) from Lampetra fluviatilis (European river lamprey).